Consider the following 888-residue polypeptide: Endochitinase A1 (888 aa).

A signal peptide spans 1–22 (MVSSKLSFVATAVAALAPLASA). The GH18 domain occupies 29-338 (SNLAIYWGQG…DHMKDILLHC (310 aa)). Residue Glu-174 is the Proton donor of the active site. Disordered stretches follow at residues 338-631 (CDPS…TTTA), 743-799 (PVTE…VSTS), and 813-855 (PLIL…YTQE). The segment covering 344–617 (VTSSSAIPSS…STDESSTTVG (274 aa)) has biased composition (low complexity). Residue Asn-622 is glycosylated (N-linked (GlcNAc...) asparagine). Positions 764 to 775 (EGSNPTQPSGAS) are enriched in polar residues. Asn-780 carries an N-linked (GlcNAc...) asparagine glycan. The segment covering 835 to 855 (PSGQNSGSSSHVPIPPSYTQE) has biased composition (polar residues). The GPI-anchor amidated glycine moiety is linked to residue Gly-863. Positions 864–888 (AASRVTGLGHGLVLTVLTLSAFFVL) are cleaved as a propeptide — removed in mature form.

It belongs to the glycosyl hydrolase 18 family. Chitinase class III subfamily.

The protein resides in the cell membrane. It localises to the secreted. The protein localises to the cell wall. It carries out the reaction Random endo-hydrolysis of N-acetyl-beta-D-glucosaminide (1-&gt;4)-beta-linkages in chitin and chitodextrins.. The cyclic peptide natural product argifin acts as a specific inhibitor. In terms of biological role, GPI-anchored chitinase involved in the degradation of chitin, a component of the cell walls of fungi and exoskeletal elements of some animals (including worms and arthropods). Required to reshape the cell wall at the sites where cell wall remodeling and/or cell wall maturation actively take place such as sites of conidia formation. In Aspergillus fumigatus (strain ATCC MYA-4609 / CBS 101355 / FGSC A1100 / Af293) (Neosartorya fumigata), this protein is Endochitinase A1 (chiA1).